The following is a 911-amino-acid chain: Zinc finger protein 721 (911 aa).

The C2H2-type 1; degenerate zinc-finger motif lies at 69-91 (FQCNARVKVFSKFANSNKDKTRH). A C2H2-type 2 zinc finger spans residues 97-119 (FKCNECGKSFQKFSDLTQHKGIH). Residues 125–147 (YTCEERGKDFGWYTDLNQHKKIH) form a C2H2-type 3; degenerate zinc finger. The C2H2-type 4 zinc finger occupies 153–175 (YKCEECGKAFNRSTNLTAHKRIH). A C2H2-type 5; degenerate zinc finger spans residues 181-203 (YTGEDRDRAFGWSTNLNEYKKIH). 7 C2H2-type zinc fingers span residues 209–231 (YKCKECGKAFMHSSHLNKHEKIH), 237–259 (YKCKECGKVISSSSSFAKHKRIH), 265–287 (FKCLECGKAFNISTTLTKHRRIH), 293–315 (YTCEVCGKAFRQSANLYVHRRIH), 321–343 (YTCGECGKTFRQSANLYVHRRIH), 349–371 (YKCEDCGKAFGRYTALNQHKKIH), and 377–399 (YKCEECGKAFNSSTNLTAHKRIH). Residues 405-427 (YTCEDRGRAFGLSTNLNEYKKIH) form a C2H2-type 13; degenerate zinc finger. 6 consecutive C2H2-type zinc fingers follow at residues 433–455 (YKCKECGKAFIHSLHLNKHEKIH), 461–483 (YKCKQCGKVITSSSSFAKHKRIH), 489–511 (FECLECGKAFTSSTTLTKHRRIH), 517–539 (YTCEVCGKAFRQSAILYVHRRIH), 545–567 (YTCEECGKTFRQSANLYVHRRIH), and 573–595 (YKCEECGKAFGRYTDLNQHKKIH). Residue K478 forms a Glycyl lysine isopeptide (Lys-Gly) (interchain with G-Cter in SUMO2) linkage. The segment at 601-623 (YKCEECGKDFVWYTDLNQQKKIY) adopts a C2H2-type 20; degenerate zinc-finger fold. The C2H2-type 21; degenerate zinc finger occupies 629–651 (YKCEECGKAFAPSTDLNQHTKIL). A Glycyl lysine isopeptide (Lys-Gly) (interchain with G-Cter in SUMO2) cross-link involves residue K649. 2 C2H2-type zinc fingers span residues 657–679 (YKCEECGKAFGWSIALNQHKKIH) and 685–707 (YKCEECGKAFSRSRNLTTHRRVH). Residues 713–735 (YKCEDRGRSFGWSTNLNEYKKIH) form a C2H2-type 24; degenerate zinc finger. 6 C2H2-type zinc fingers span residues 741-763 (YKCKECGKVFKQSSHLNRHEKIH), 769-791 (YKCKECGKVITSSSSFAKHKRIH), 797-819 (FKCLECGKAFTSSTTLTKHRRIH), 825-847 (YTCEECGKAFRQSAILYVHRRIH), 853-875 (YTCGECGKTFRQSANLYAHKKIH), and 881-903 (YTCGDCGKTFRQSANLYAHKKIH). K786 participates in a covalent cross-link: Glycyl lysine isopeptide (Lys-Gly) (interchain with G-Cter in SUMO2).

Belongs to the krueppel C2H2-type zinc-finger protein family.

The protein resides in the nucleus. In terms of biological role, may be involved in transcriptional regulation. In Homo sapiens (Human), this protein is Zinc finger protein 721 (ZNF721).